The primary structure comprises 172 residues: uncharacterized protein (172 aa).

It belongs to the flavoredoxin family. FMN is required as a cofactor.

This is an uncharacterized protein from Pyrococcus abyssi (strain GE5 / Orsay).